A 426-amino-acid polypeptide reads, in one-letter code: 3-phosphoshikimate 1-carboxyvinyltransferase (426 aa).

Positions 22, 23, and 27 each coordinate 3-phosphoshikimate. Lysine 22 contacts phosphoenolpyruvate. Positions 96 and 124 each coordinate phosphoenolpyruvate. 3-phosphoshikimate is bound by residues serine 170, serine 171, glutamine 172, serine 198, aspartate 314, asparagine 337, and lysine 341. Glutamine 172 lines the phosphoenolpyruvate pocket. Aspartate 314 (proton acceptor) is an active-site residue. The phosphoenolpyruvate site is built by arginine 345, arginine 387, and lysine 412.

Belongs to the EPSP synthase family. As to quaternary structure, monomer.

The protein resides in the cytoplasm. The catalysed reaction is 3-phosphoshikimate + phosphoenolpyruvate = 5-O-(1-carboxyvinyl)-3-phosphoshikimate + phosphate. The protein operates within metabolic intermediate biosynthesis; chorismate biosynthesis; chorismate from D-erythrose 4-phosphate and phosphoenolpyruvate: step 6/7. Functionally, catalyzes the transfer of the enolpyruvyl moiety of phosphoenolpyruvate (PEP) to the 5-hydroxyl of shikimate-3-phosphate (S3P) to produce enolpyruvyl shikimate-3-phosphate and inorganic phosphate. This Vibrio cholerae serotype O1 (strain ATCC 39541 / Classical Ogawa 395 / O395) protein is 3-phosphoshikimate 1-carboxyvinyltransferase.